The primary structure comprises 274 residues: MASDSRDRETACMLEFAVQMTCQSCVDAVSRSLQGVAGIQSVEVQLENQMVLVQTTLPSQVVQALLEDTGRQAVLKGMGSGRWQNLEAAVAILGGSGPVQGVVRFLQLTPERCLIEGTIDGLKPGLHGLHVHQFGDLTRNCNSCGDHFNPDGMSHGGPQDSDRHRGDLGNVCADADGRAVFRMEDELLKVWDVIGRSLVIDEGEDDLGRGGHPLSKITGNSGERLACGIIARSAGLFQNPKQICSCDGLTIWEERXRPIAGEGRKEPAQPPAHL.

Residues 11–74 (ACMLEFAVQM…LLEDTGRQAV (64 aa)) form the HMA domain. Positions 22 and 25 each coordinate Cu cation. Residue Lys-76 forms a Glycyl lysine isopeptide (Lys-Gly) (interchain with G-Cter in ubiquitin) linkage. The tract at residues 88–234 (AAVAILGGSG…LACGIIARSA (147 aa)) is superoxide dismutase-like. Cysteines 141 and 227 form a disulfide. 4 residues coordinate Zn(2+): His-147, His-155, His-164, and Asp-167. Glycyl lysine isopeptide (Lys-Gly) (interchain with G-Cter in ubiquitin) cross-links involve residues Lys-189, Lys-216, and Lys-241. Cu cation is bound by residues Cys-244 and Cys-246.

This sequence in the C-terminal section; belongs to the Cu-Zn superoxide dismutase family. Homodimer, and heterodimer with SOD1. Interacts with COMMD1. Interacts with XIAP/BIRC4. Interacts with SLC31A1(via C-terminal domain); this interaction is Cu(1+)-mediated. The heterodimer CCS:SOD1 interacts with SLC31A1; this heterotrimer is Cu(1+)-mediated and its maintenance is regulated through SOD1 activation. Cu(2+) is required as a cofactor. The cofactor is Zn(2+). Post-translationally, ubiquitinion by XIAP/BIRC4 leads to enhancement of its chaperone activity toward its physiologic target, SOD1, rather than proteasomal degradation. XIAP/BIRC4 preferentially ubiquitinates at Lys-241.

The protein localises to the cytoplasm. Delivers copper to copper zinc superoxide dismutase (SOD1). The sequence is that of Copper chaperone for superoxide dismutase from Sus scrofa (Pig).